A 2480-amino-acid polypeptide reads, in one-letter code: Polyprotein P1234 (2480 aa).

One can recognise an Alphavirus-like MT domain in the interval 27–257 (ESQQVTPNDH…ESRRLLKSWH (231 aa)). Residues 242–261 (GXTLYIESRRLLKSWHLPSV) form a nsP1 membrane-binding region. S-palmitoyl cysteine; by host attachment occurs at residues Cys-415 and Cys-417. The interval 480–506 (YSGDRNEAREAEKEAEETKEAELTREA) is disordered. The segment covering 483–504 (DRNEAREAEKEAEETKEAELTR) has biased composition (basic and acidic residues). Residues 688–840 (DLINPPFHEF…HDICTQVLHK (153 aa)) enclose the (+)RNA virus helicase ATP-binding domain. An a ribonucleoside 5'-triphosphate-binding site is contributed by 719 to 726 (GVPGSGKS). Positions 841 to 989 (SISRRCTLPI…LEEWQEEHDN (149 aa)) constitute a (+)RNA virus helicase C-terminal domain. Residues 1002-1324 (DPFQNKAKVC…QRLSSMFACN (323 aa)) form the Peptidase C9 domain. The tract at residues 1003-1022 (PFQNKAKVCWAKCLVQVLET) is nucleolus localization signal. The active-site For cysteine protease nsP2 activity is Cys-1011. Residues 1055–1064 (TKYYGVDLDS) carry the Nuclear export signal motif. Catalysis depends on His-1080, which acts as the For cysteine protease nsP2 activity. Residues 1179–1183 (PHKRV) carry the Nuclear localization signal motif. Residues 1332–1491 (APSYRVRRTD…KIQEAIDRRT (160 aa)) enclose the Macro domain. ADP-D-ribose contacts are provided by Asp-1341, Asn-1355, Gly-1363, Gly-1443, Val-1444, and Phe-1445. Zn(2+) contacts are provided by Cys-1593, Cys-1595, Cys-1618, and Cys-1636. Position 1675 is a phosphothreonine; by host (Thr-1675). 2 consecutive short sequence motifs (FGDF; binding to host G3BP1) follow at residues 1843–1846 (FGDF) and 1854–1857 (FGDI). The region spanning 2234–2349 (DAVLETDIAS…HGVRSDPLMA (116 aa)) is the RdRp catalytic domain.

In terms of assembly, interacts with non-structural protein 3. Interacts with RNA-directed RNA polymerase nsP4. Interacts with protease nsP2. interacts with itself. As to quaternary structure, interacts with mRNA-capping enzyme nsP1. Interacts with host DDX1. Interacts with host DDX3. Interacts (via C-terminus) with host G3BP1; this interaction inhibits the formation of host stress granules on viral mRNAs and the nsp3-G3BP1 complexes bind viral RNAs and probably orchestrate the assembly of viral replication complexes. Interacts (via C-terminus) with host G3BP2; this interaction inhibits the formation of host stress granules on viral mRNAs and the nsp3-G3BP2 complexes bind viral RNAs and probably orchestrate the assembly of viral replication complexes. Interacts with mRNA-capping enzyme nsP1. Interacts with protease nsP2. interacts with itself. In terms of assembly, interacts with RNA-directed RNA polymerase nsP4. Interacts with mRNA-capping enzyme nsP1. Interacts with KPNA1/karyopherin-alpha1; this interaction probably allows the active transport of protease nsP2 into the host nucleus. It depends on Mg(2+) as a cofactor. The cofactor is Mn(2+). Specific enzymatic cleavages in vivo yield mature proteins. The processing of the polyprotein is temporally regulated. In early stages (1.7 hpi), P1234 is first cleaved in trans through its nsP2 protease activity, releasing P123' and nsP4, which associate to form the early replication complex. At the same time, P1234 is also cut at the nsP1/nsP2 site early in infection but with lower efficiency. After replication of the viral minus-strand RNAs (4 hpi), the polyproteins are cut at the nsP1/nsP2 and nsP2/nsP3 sites very efficiently, preventing accumulation of P123' and P1234 and allowing the formation of the late replication complex. NsP3'/nsP4 site is not cleaved anymore and P34 is produced rather than nsP4. In terms of processing, specific enzymatic cleavages in vivo yield mature proteins. The processing of the polyprotein is temporally regulated. In early stages (1.7 hpi), P123 is cleaved at the nsP1/nsP2 site with low efficiency. After replication of the viral minus-strand RNAs (4 hpi), the polyproteins are cut at the nsP1/nsP2 and nsP2/nsP3 sites very efficiently, preventing accumulation of P123 and allowing the formation of the late replication complex. Post-translationally, specific enzymatic cleavages in vivo yield mature proteins. The processing of the polyprotein is temporally regulated. In early stages (1.7 hpi), P123' is cleaved at the nsP1/nsP2 site with low efficiency. After replication of the viral minus-strand RNAs (4 hpi), the polyproteins are cut at the nsP1/nsP2 and nsP2/nsP3 sites very efficiently, preventing accumulation of P123' and allowing the formation of the late replication complex. Palmitoylated by host palmitoyltransferases ZDHHC2 and ZDHHC19. In terms of processing, phosphorylated by host on serines and threonines. Post-translationally, ubiquitinated; targets the protein for rapid degradation via the ubiquitin system. Nsp4 is present in extremely low quantities due to low frequency of translation through the amber stop-codon and the degradation by the ubiquitin pathway.

The protein localises to the host cytoplasmic vesicle membrane. It localises to the host cell membrane. Its subcellular location is the host cell projection. It is found in the host filopodium. The protein resides in the host nucleus. The protein localises to the host cytoplasm. It catalyses the reaction GTP + S-adenosyl-L-methionine = N(7)-methyl-GTP + S-adenosyl-L-homocysteine. The enzyme catalyses N(7)-methyl-GTP + L-histidyl-[protein] = N(tele)-(N(7)-methylguanosine 5'-phospho)-L-histidyl-[protein] + diphosphate. The catalysed reaction is N(tele)-(N(7)-methylguanosine 5'-phospho)-L-histidyl-[protein] + a 5'-end diphospho-(purine-ribonucleoside) in mRNA + H(+) = a 5'-end (N(7)-methyl 5'-triphosphoguanosine)-(purine-ribonucleoside) in mRNA + L-histidyl-[protein]. It carries out the reaction a 5'-end triphospho-ribonucleoside in mRNA + H2O = a 5'-end diphospho-ribonucleoside in mRNA + phosphate + H(+). It catalyses the reaction a ribonucleoside 5'-triphosphate + H2O = a ribonucleoside 5'-diphosphate + phosphate + H(+). The enzyme catalyses ATP + H2O = ADP + phosphate + H(+). The catalysed reaction is RNA(n) + a ribonucleoside 5'-triphosphate = RNA(n+1) + diphosphate. It carries out the reaction 4-O-(ADP-D-ribosyl)-L-aspartyl-[protein] + H2O = L-aspartyl-[protein] + ADP-D-ribose + H(+). It catalyses the reaction 5-O-(ADP-D-ribosyl)-L-glutamyl-[protein] + H2O = L-glutamyl-[protein] + ADP-D-ribose + H(+). The enzyme catalyses RNA(n) + ATP = RNA(n)-3'-adenine ribonucleotide + diphosphate. The catalysed reaction is ADP-alpha-D-ribose 1''-phosphate + H2O = ADP-D-ribose + phosphate. Inactive precursor of the viral replicase, which is activated by cleavages carried out by the viral protease nsP2. In terms of biological role, the early replication complex formed by the polyprotein P123 and nsP4 synthesizes minus-strand RNAs. As soon P123 is cleaved into mature proteins, the plus-strand RNAs synthesis begins. Its function is as follows. The early replication complex formed by the polyprotein P123' and nsP4 synthesizes minus-strand RNAs. Polyprotein P123' is a short-lived polyprotein that accumulates during early stage of infection. As soon P123' is cleaved into mature proteins, the plus-strand RNAs synthesis begins. Functionally, cytoplasmic capping enzyme that catalyzes two virus-specific reactions: methyltransferase and nsP1 guanylyltransferase. mRNA-capping is necessary since all viral RNAs are synthesized in the cytoplasm, and host capping enzymes are restricted to the nucleus. The enzymatic reaction involves a covalent link between 7-methyl-GMP and nsP1, whereas eukaryotic capping enzymes form a covalent complex only with GMP. nsP1 capping consists in the following reactions: GTP is first methylated into 7-methyl-GMP and then is covalently linked to nsP1 to form the m7GMp-nsP1 complex from which 7-methyl-GMP complex is transferred to the mRNA to create the cap structure. NsP1 is also needed for the initiation of the minus-strand RNAs synthesis. Probably serves as a membrane anchor for the replication complex composed of nsP1-nsP4. Palmitoylated nsP1 is remodeling host cell cytoskeleton, and induces filopodium-like structure formation at the surface of the host cell. Multifunctional protein whose N-terminus is part of the RNA polymerase complex and displays NTPase, RNA triphosphatase and helicase activities. NTPase and RNA triphosphatase are involved in viral RNA capping and helicase keeps a check on the dsRNA replication intermediates. The C-terminus harbors a protease that specifically cleaves the polyproteins and releases the mature proteins. Required for the shutoff of minus-strand RNAs synthesis. Specifically inhibits the host IFN response by promoting the nuclear export of host STAT1. Also inhibits host transcription by inducing the rapid proteasome-dependent degradation of POLR2A, a catalytic subunit of the RNAPII complex. The resulting inhibition of cellular protein synthesis serves to ensure maximal viral gene expression and to evade host immune response. In terms of biological role, seems to be essential for minus-strand RNAs and subgenomic 26S mRNAs synthesis. Displays mono-ADP-ribosylhydrolase activity. ADP-ribosylation is a post-translational modification that controls various processes of the host cell and the virus probably needs to revert it for optimal viral replication. Binds proteins of FXR family and sequesters them into the viral RNA replication complexes thereby inhibiting the formation of host stress granules on viral mRNAs. The nsp3'-FXR complexes bind viral RNAs and probably orchestrate the assembly of viral replication complexes, thanks to the ability of FXR family members to self-assemble and bind DNA. Its function is as follows. Seems to be essential for minus-strand RNAs and subgenomic 26S mRNAs synthesis. Displays mono-ADP-ribosylhydrolase activity. ADP-ribosylation is a post-translational modification that controls various processes of the host cell and the virus probably needs to revert it for optimal viral replication. Binds proteins of G3BP family and sequesters them into the viral RNA replication complexes thereby inhibiting the formation of host stress granules on viral mRNAs. The nsp3-G3BP complexes bind viral RNAs and probably orchestrate the assembly of viral replication complexes, thanks to the ability of G3BP family members to self-assemble and bind DNA. Functionally, RNA dependent RNA polymerase. Replicates genomic and antigenomic RNA by recognizing replications specific signals. The early replication complex formed by the polyprotein P123 and nsP4 synthesizes minus-strand RNAs. The late replication complex composed of fully processed nsP1-nsP4 is responsible for the production of genomic and subgenomic plus-strand RNAs. In Aedes (Common banded mosquito), this protein is Polyprotein P1234.